A 574-amino-acid chain; its full sequence is R-linalool synthase, chloroplastic (574 aa).

The transit peptide at 1-40 directs the protein to the chloroplast; sequence MSCARITVTLPYRSAKTSIQRGITHCPALLRPRFSACTPL. Polar residues predominate over residues 52–61; that stretch reads INGDNSPLKN. The interval 52–71 is disordered; the sequence is INGDNSPLKNTHQHVEERSS. 5 residues coordinate (2E)-geranyl diphosphate: R287, D324, D328, R467, and D470. Mg(2+) is bound by residues D324 and D328. Residues 324-328 carry the DDXXD motif motif; the sequence is DDIFD. Mg(2+)-binding residues include D470, T474, and E478.

The protein belongs to the terpene synthase family. Tpsb subfamily. Requires Mg(2+) as cofactor. Mn(2+) is required as a cofactor.

The protein resides in the plastid. The protein localises to the chloroplast. The catalysed reaction is (2E)-geranyl diphosphate + H2O = (R)-linalool + diphosphate. Its pathway is secondary metabolite biosynthesis; terpenoid biosynthesis. Monoterpene synthase that catalyzes the formation of (3R)-linalool from geranyl diphosphate. The chain is R-linalool synthase, chloroplastic (LIS) from Ocimum basilicum (Sweet basil).